Consider the following 723-residue polypeptide: MSENKCPMHHSAGGTTNRDWWPKQLRLDILHQHSSLSNPMGDDFNYAEAFKSLDLAAVKQDLLALMTDSQDWWPADFGHYGPLFIRMAWHSAGTYRTGDGRGGAGSGNQRFAPLNSWPDNVSLDKARRLIWPIKQKYGNKISWADLIILTGNVALESMGFKTLGFAGGRVDIWEPEADIYWGAEDKWLDDKRYSGERDLEDPLAAVQMGLIYVNPEGPNGDPDPFAAAVDIRETFARMAMNDEETVALIAGGHTFGKTHGAGDAALVGPEPEAASIEQQGLGWKSSYKSGKGGDAISSGLEVTWTSTPTQWSNNFFENLFGYEWELTKSPAGAHQWIPKNGAGKGVIPDAHDASKRHVPAMLTTDLALIFDPDYEKISRRFFEHPDEFADVFAKAWYKLTHRDMGPCTRYLGPEVPAEAFLWQDPIPAVDHPLVDEQDVTDLKLKIIGSGLTISEVVATAWASASTYRGSDMRGGANGARIRLAPQKDWPVNQPEQLAKVLKVLESIQSEFNKSGKKISLADLIVLAGCVGIDQAARNAGVEVTIPFTPGRMDATQAQTDVESFAVLEPVADGFRNYHPTQFSVSAEELLVDRAQLLTLTAPEMTVLIGGLRVLDTNADQSKTGVLTARPEFLTNDFFVNLLDMGTTWKPTSKAEDRFEGVDRVSGQPKWTASRVDLIFGSNSQLRALAEVYASSDAQLRFIDDFIAAWTKVMNLDRFDLRRA.

Residues 89-212 (WHSAGTYRTG…LAAVQMGLIY (124 aa)) constitute a cross-link (tryptophyl-tyrosyl-methioninium (Trp-Tyr) (with M-238)). Histidine 90 serves as the catalytic Proton acceptor. The tryptophyl-tyrosyl-methioninium (Tyr-Met) (with W-89) cross-link spans 212-238 (YVNPEGPNGDPDPFAAAVDIRETFARM). Histidine 253 is a heme b binding site.

This sequence belongs to the peroxidase family. Peroxidase/catalase subfamily. As to quaternary structure, homodimer or homotetramer. It depends on heme b as a cofactor. Post-translationally, formation of the three residue Trp-Tyr-Met cross-link is important for the catalase, but not the peroxidase activity of the enzyme.

It carries out the reaction H2O2 + AH2 = A + 2 H2O. The enzyme catalyses 2 H2O2 = O2 + 2 H2O. Bifunctional enzyme with both catalase and broad-spectrum peroxidase activity. The sequence is that of Catalase-peroxidase from Shewanella baltica (strain OS185).